The primary structure comprises 506 residues: Methylthioalkylmalate synthase 1, chloroplastic (506 aa).

The transit peptide at 1-49 directs the protein to the chloroplast; it reads MASSLLTSSVMIPTTGSTVVGRSVLPFQSSLHSLRLTHSYKNPALFISC. In terms of domain architecture, Pyruvate carboxyltransferase spans 85–359; that stretch reads VRVFDTTLRD…YTKIDTRQIM (275 aa). S98 carries the post-translational modification Phosphoserine.

The protein belongs to the alpha-IPM synthase/homocitrate synthase family. In terms of assembly, monomer. The cofactor is Mn(2+). In terms of tissue distribution, highly expressed in leaves, flowers, roots and siliques. Not detected in flowers in PubMed:12432038.

It is found in the plastid. It localises to the chloroplast. It catalyses the reaction an omega-(methylsulfanyl)-2-oxoalkanoate + acetyl-CoA + H2O = a 2-(omega-methylsulfanyl)alkylmalate + CoA + H(+). 1 mM DTT required for activity. Activated by ATP and inhibited by iodoacetamide. In terms of biological role, determines the side chain length of aliphatic glucosinolate structures. Catalyzes exclusively the condensation reactions of both the first and second methionine carbon chain elongation. This chain is Methylthioalkylmalate synthase 1, chloroplastic (MAM1), found in Arabidopsis thaliana (Mouse-ear cress).